The following is a 483-amino-acid chain: Protein PLASTID TRANSCRIPTIONALLY ACTIVE 14 (483 aa).

The N-terminal 62 residues, 1–62 (MASSVSLQFL…TQPFPLFQSP (62 aa)), are a transit peptide targeting the chloroplast. The SET domain occupies 80-325 (YKIGYVRSVR…KGEEMTINYM (246 aa)). Tyr324 is a binding site for S-adenosyl-L-methionine.

Belongs to the class V-like SAM-binding methyltransferase superfamily. In terms of assembly, component of the transcriptionally active chromosome (TAC) complexes. Interacts with PTAC12/HMR/PAP5 and PTAC7. Binds to SL1/MTERF3. In terms of tissue distribution, mostly expressed in leaves, flowers and seedlings, and, to a lower extent, in stems and roots.

It localises to the plastid. Its subcellular location is the chloroplast thylakoid. Functionally, essential for chloroplast development, especially for thylakoid formation. Involved in plastid gene expression, probably by maintaining plastid-encoded RNA polymerase (PEP) activity. The polypeptide is Protein PLASTID TRANSCRIPTIONALLY ACTIVE 14 (Arabidopsis thaliana (Mouse-ear cress)).